The following is a 735-amino-acid chain: MWLILLLLSGLSELGGLSQSQTEGTREKLHVQVTVPEKIRSVTSNGYETQVTYNLKIEGKTYTLDLMQKPFLPPNFRVYSYDNAGIMRSLEQKFQNICYFQGYIEGYPNSMVIVSTCTGLRGFLQFGNVSYGIEPLESSSGFEHVIYQVEPEKGGALLYAEKDIDLRDSQYKIRSIKPQRIVSHYLEIHIVVEKQMFEHIGADTAIVTQKIFQLIGLANAIFAPFNLTVILSSLEFWMDENKILTTGDANKLLYRFLKWKQSYLVLRPHDMAFLLVYRNTTDYVGATYQGKMCDKNYAGGVALHPKAVTLESLAIILVQLLSLSMGLAYDDVNKCQCGVPVCVMNPEAPHSSGVRAFSNCSMEDFSKFITSQSSHCLQNQPRLQPSYKMAVCGNGEVEEDEICDCGKKGCAEMPPPCCNPDTCKLSDGSECSSGICCNSCKLKRKGEVCRLAQDECDVTEYCNGTSEVCEDFFVQNGHPCDNRKWICINGTCQSGEQQCQDLFGIDAGFGSSECFWELNSKSDISGSCGISAGGYKECPPNDRMCGKIICKYQSENILKLRSATVIYANISGHVCVSLEYPQGHNESQKMWVRDGTVCGSNKVCQNQKCVADTFLGYDCNLEKCNHHGVCNNKKNCHCDPTYLPPDCKRMKDSYPGGSIDSGNKERAEPIPVRPYIASAYRSKSPRWPFFLIIPFYVVILVLIGMLVKVYSQRMKWRMDDFSSEEQFESESESKD.

Positions 1-18 (MWLILLLLSGLSELGGLS) are cleaved as a signal peptide. Positions 19–180 (QSQTEGTREK…YKIRSIKPQR (162 aa)) are excised as a propeptide. Residues 19-686 (QSQTEGTREK…ASAYRSKSPR (668 aa)) lie on the Extracellular side of the membrane. Residues Asn128, Asn226, and Asn279 are each glycosylated (N-linked (GlcNAc...) asparagine). In terms of domain architecture, Peptidase M12B spans 184-381 (HYLEIHIVVE…QSSHCLQNQP (198 aa)). Intrachain disulfides connect Cys293–Cys376, Cys335–Cys360, Cys337–Cys342, and Cys449–Cys469. Residues Asn359, Asn463, Asn489, Asn569, and Asn585 are each glycosylated (N-linked (GlcNAc...) asparagine). The region spanning 389 to 476 (MAVCGNGEVE…EVCEDFFVQN (88 aa)) is the Disintegrin domain. Positions 615–648 (LGYDCNLEKCNHHGVCNNKKNCHCDPTYLPPDCK) constitute an EGF-like domain. Intrachain disulfides connect Cys619/Cys630, Cys624/Cys636, and Cys638/Cys647. A helical transmembrane segment spans residues 687–707 (WPFFLIIPFYVVILVLIGMLV). The Cytoplasmic segment spans residues 708–735 (KVYSQRMKWRMDDFSSEEQFESESESKD). Residue Ser729 is modified to Phosphoserine.

Heterodimer with ADAM1/fertilin subunit alpha. Post-translationally, the signal and the metalloprotease domain are cleaved during the epididymal maturation of the spermatozoa. In terms of tissue distribution, expressed in the testis and testicular sperm (at protein level).

The protein resides in the membrane. Functionally, sperm surface membrane protein that may be involved in sperm-egg plasma membrane adhesion and fusion during fertilization. Could have a direct role in sperm-zona binding or migration of sperm from the uterus into the oviduct. Interactions with egg membrane could be mediated via binding between its disintegrin-like domain to one or more integrins receptors on the egg. This is a non catalytic metalloprotease-like protein. The polypeptide is Disintegrin and metalloproteinase domain-containing protein 2 (Mus musculus (Mouse)).